A 103-amino-acid chain; its full sequence is Large ribosomal subunit protein uL24 (103 aa).

This sequence belongs to the universal ribosomal protein uL24 family. Part of the 50S ribosomal subunit.

One of two assembly initiator proteins, it binds directly to the 5'-end of the 23S rRNA, where it nucleates assembly of the 50S subunit. Its function is as follows. One of the proteins that surrounds the polypeptide exit tunnel on the outside of the subunit. This Actinobacillus pleuropneumoniae serotype 3 (strain JL03) protein is Large ribosomal subunit protein uL24.